The sequence spans 121 residues: Cell division protein FtsB (121 aa).

Topologically, residues 1 to 6 are cytoplasmic; that stretch reads MRNWRW. Residues 7–24 form a helical membrane-spanning segment; it reads LLLVLAVLLAWLQYRFWF. Residues 25 to 121 lie on the Periplasmic side of the membrane; the sequence is GPGNSGEVMM…PEPVDPVDHP (97 aa). Residues 31–66 adopt a coiled-coil conformation; the sequence is EVMMLEAQVAHQTQDNEGLRQRNQALAAEVKDLKDG. A disordered region spans residues 98–121; sequence APASAEASAPAQQAPEPVDPVDHP. Positions 99 to 113 are enriched in low complexity; the sequence is PASAEASAPAQQAPE.

It belongs to the FtsB family. As to quaternary structure, part of a complex composed of FtsB, FtsL and FtsQ.

The protein localises to the cell inner membrane. In terms of biological role, essential cell division protein. May link together the upstream cell division proteins, which are predominantly cytoplasmic, with the downstream cell division proteins, which are predominantly periplasmic. This chain is Cell division protein FtsB, found in Xanthomonas axonopodis pv. citri (strain 306).